The chain runs to 348 residues: D-alanine--D-alanine ligase (348 aa).

Residues lysine 132–arginine 334 form the ATP-grasp domain. Glutamate 162 to glutamate 217 serves as a coordination point for ATP. Residues aspartate 288, glutamate 301, and asparagine 303 each coordinate Mg(2+).

Belongs to the D-alanine--D-alanine ligase family. It depends on Mg(2+) as a cofactor. The cofactor is Mn(2+).

The protein localises to the cytoplasm. The enzyme catalyses 2 D-alanine + ATP = D-alanyl-D-alanine + ADP + phosphate + H(+). It participates in cell wall biogenesis; peptidoglycan biosynthesis. Functionally, cell wall formation. This chain is D-alanine--D-alanine ligase, found in Streptococcus equi subsp. equi (strain 4047).